Here is a 147-residue protein sequence, read N- to C-terminus: Large ribosomal subunit protein bL9 (147 aa).

It belongs to the bacterial ribosomal protein bL9 family.

Its function is as follows. Binds to the 23S rRNA. In Bacteroides fragilis (strain YCH46), this protein is Large ribosomal subunit protein bL9.